The chain runs to 1182 residues: Tyrosine-protein kinase ABL2 (1182 aa).

Positions 1–42 (MGQQVGRVGEAPGLQQPQPRGIRGSSAARPSGRRRDPAGRTA) are disordered. Residue G2 is the site of N-myristoyl glycine attachment. Residues 2 to 106 (GQQVGRVGEA…SKENLLGATE (105 aa)) form a CAP region. Low complexity predominate over residues 20–30 (RGIRGSSAARP). S97 is subject to Phosphoserine. The SH3 domain maps to 107–167 (SDPNLFVALY…PSNYITPVNS (61 aa)). A phosphotyrosine mark is found at Y116, Y161, Y174, Y185, Y218, and Y231. Residues 173–263 (WYHGPVSRSA…GLVTTLHYPA (91 aa)) enclose the SH2 domain. Y261 is subject to Phosphotyrosine; by ABL1 and autocatalysis. Y272 bears the Phosphotyrosine; by autocatalysis mark. S275 carries the phosphoserine modification. Positions 288 to 539 (ITMKHKLGGG…PSFAETHQAF (252 aa)) constitute a Protein kinase domain. ATP is bound at residue 294–302 (LGGGQYGEV). Phosphotyrosine occurs at positions 299 and 303. ATP-binding positions include K317 and 362-368 (EYMPYGN). D409 functions as the Proton acceptor in the catalytic mechanism. The Kinase activation loop motif lies at 427 to 451 (DFGLSRLMTGDTYTAHAGAKFPIKW). Y439 carries the phosphotyrosine; by autocatalysis and SRC-type Tyr-kinases modification. At Y459 the chain carries Phosphotyrosine. Y568 is subject to Phosphotyrosine; by autocatalysis. 5 positions are modified to phosphoserine: S606, S621, S632, S634, and S656. Disordered regions lie at residues 612 to 642 (IRST…DAKE) and 655 to 674 (SSFM…SSFR). The Nuclear localization signal motif lies at 659-661 (KKR). Residues S670, S671, and S672 each carry the phosphoserine modification. Phosphotyrosine; by autocatalysis is present on Y684. The F-actin-binding stretch occupies residues 695–930 (SLQNADGFSV…AVLPTTHNHK (236 aa)). At Y719 the chain carries Phosphotyrosine. The segment at 765-796 (LRAGKPTASDDTSKPFPRSNSTSSMSSGLPEQ) is disordered. Residue K778 is modified to N6-acetyllysine. Positions 782 to 793 (RSNSTSSMSSGL) are enriched in polar residues. S785 is subject to Phosphoserine. Phosphothreonine is present on T802. Over residues 809 to 825 (RSKLQLERTVSTSSQPE) the composition is skewed to polar residues. The segment at 809-858 (RSKLQLERTVSTSSQPEENVDRANDMLPKKSEEGAAPARERPKAKLLPRG) is disordered. Residues S819 and S822 each carry the phosphoserine modification. A compositionally biased stretch (basic and acidic residues) spans 827–851 (NVDRANDMLPKKSEEGAAPARERPK). S915 and S936 each carry phosphoserine. The disordered stretch occupies residues 964 to 1059 (HQVTSSGDKD…TSSISPAKMA (96 aa)). Residues 1020–1182 (EGGKKAAPGP…VQEISDVVQR (163 aa)) form an F-actin-binding region.

This sequence belongs to the protein kinase superfamily. Tyr protein kinase family. ABL subfamily. Interacts with PSMA7. Interacts with CTTN. Found in a complex with ABL1, ABL2, CRK and UNC119; leading to the inhibition of CRK phosphorylation by ABL kinases. The cofactor is Mg(2+). Mn(2+) is required as a cofactor. In terms of processing, phosphorylated at Tyr-261 by ABL1 in response to oxidative stress. Phosphorylated by PDGFRB. Post-translationally, polyubiquitinated. Polyubiquitination of ABL2 leads to degradation. In terms of tissue distribution, most abundant in adult mouse brain, especially in synapse-rich regions.

It is found in the cytoplasm. Its subcellular location is the cytoskeleton. It catalyses the reaction L-tyrosyl-[protein] + ATP = O-phospho-L-tyrosyl-[protein] + ADP + H(+). With respect to regulation, stabilized in the inactive form by an association between the SH3 domain and the SH2-TK linker region, interactions of the N-terminal cap, and contributions from an N-terminal myristoyl group and phospholipids. Activated by autophosphorylation as well as by SRC-family kinase-mediated phosphorylation. Activated by RIN1 binding to the SH2 and SH3 domains. Inhibited by imatinib mesylate (Gleevec). Phosphatidylinositol 4,5-bisphosphate (PIP2), a highly abundant phosphoinositide known to regulate cytoskeletal and membrane proteins, inhibits the tyrosine kinase activity. Its function is as follows. Non-receptor tyrosine-protein kinase that plays an ABL1-overlapping role in key processes linked to cell growth and survival such as cytoskeleton remodeling in response to extracellular stimuli, cell motility and adhesion, receptor endocytosis, autophagy, DNA damage response and apoptosis. Coordinates actin remodeling through tyrosine phosphorylation of proteins controlling cytoskeleton dynamics like MYH10 (involved in movement); CTTN (involved in signaling); or TUBA1 and TUBB (microtubule subunits). Binds directly F-actin and regulates actin cytoskeletal structure through its F-actin-bundling activity. Involved in the regulation of cell adhesion and motility through phosphorylation of key regulators of these processes such as CRK, CRKL or DOK1. Required for adhesion-dependent phosphorylation of ARHGAP35 which promotes its association with RASA1, resulting in recruitment of ARHGAP35 to the cell periphery where it inhibits RHO. Phosphorylates multiple receptor tyrosine kinases like PDGFRB and other substrates which are involved in endocytosis regulation such as RIN1. In brain, may regulate neurotransmission by phosphorylating proteins at the synapse. Finally, functions as its own regulator through autocatalytic activity as well as through phosphorylation of its inhibitor, ABI1. Positively regulates chemokine-mediated T-cell migration, polarization, and homing to lymph nodes and immune-challenged tissues, potentially via activation of NEDD9/HEF1 and RAP1. In Mus musculus (Mouse), this protein is Tyrosine-protein kinase ABL2.